The primary structure comprises 486 residues: MLGKDYMLAIILVNCDDDLWGDQNLEGETGLPPGWRKIRDAAGTYYWHVPSGSTQWQRPTWELPGAEDPGRGTEGIWELRPPKGRSFSSLDSSLNRSNSLTWYSEDSYVRSLEPGAKCFAVRSLGWVEVPEEDLAPGKSSIAVNNCIQQLAQTRNRSQPHDGTWGEGQNMLMILKKDAMSLLNPLDHSLIHCQPLVHIRVWGVGSSKGRDRDFAFVAGDKDSCMLKCHVFHCDVPAKAIASALQGLCAQILSERVGVSGEAACCSPDPISPEDLPRQVELLDAVSQAAQKYEALYMGILPVTKAMGMDVLNEAIGTLTARGDRKTWVPAMLSVSDSLMTAHAIQAEAGAEEEPLWQCPVRLVTFIGVGRDPHTFGLIADLGCQSFQCAAFWCEPHAGGLSEAVQAACMVQYQKCLVASAARGKAWGAQARARLRLKRTSSMDSPGGPLPPPLLKGGAGGAGAAPRKRGVFSFLDAFRLKPSLLHMS.

The WW domain maps to 29-61 (TGLPPGWRKIRDAAGTYYWHVPSGSTQWQRPTW). PID domains lie at 113–280 (EPGA…QVEL) and 285–440 (SQAA…RTSS). Positions 438–460 (TSSMDSPGGPLPPPLLKGGAGGA) are disordered.

In terms of assembly, interacts with APP (via intracellular domain). Interacts with APLP1 and APLP2 (via intracellular domain).

The protein resides in the cytoplasm. It localises to the nucleus. Its function is as follows. May modulate the internalization of amyloid-beta precursor protein. This Mus musculus (Mouse) protein is Amyloid-beta A4 precursor protein-binding family B member 3.